A 316-amino-acid chain; its full sequence is ATP synthase gamma chain (316 aa).

It belongs to the ATPase gamma chain family. As to quaternary structure, F-type ATPases have 2 components, CF(1) - the catalytic core - and CF(0) - the membrane proton channel. CF(1) has five subunits: alpha(3), beta(3), gamma(1), delta(1), epsilon(1). CF(0) has three main subunits: a, b and c.

It is found in the cellular thylakoid membrane. In terms of biological role, produces ATP from ADP in the presence of a proton gradient across the membrane. The gamma chain is believed to be important in regulating ATPase activity and the flow of protons through the CF(0) complex. This is ATP synthase gamma chain from Synechococcus sp. (strain ATCC 27144 / PCC 6301 / SAUG 1402/1) (Anacystis nidulans).